The following is a 465-amino-acid chain: MISAIRPAVRSSVRVAPMANTAFRAYSTQDGLKERFAELIPENVEKIKKLRKEKGNTVIGEVILDQAYGGMRGIKGLVWEGSVLDPEEGIRFRGLTIPDLQKQLPHAPGGKEPLPEGLFWLLLTGEIPTDAQVKGLSADWASRAEIPKHVEELIDRCPPTLHPMAQLGIAVNALESESQFTKAYEKGVNKKEYWQYTYEDSMNLIAKLPVIASRIYRNLFKDGKIVGSIDNSLDYSANFASLLGFGDNKEFIELLRLYLTIHADHEGGNVSAHTTKLVGSALSSPFLSLSAGLNGLAGPLHGRANQEVLEWILEMKSKIGSDVTKEDIEKYLWDTLKAGRVVPGYGHAVLRKTDPRYTAQREFALEHMPDYDLFHLVSTIYEVAPKVLTEHGKTKNPWPNVDSHSGVLLQYYGLTEQSYYTVLFGVSRAIGVLPQLIMDRAYGAPIERPKSFSTEKYAELVGLKL.

Arginine 72 and lysine 190 together coordinate CoA. Histidine 265 is a binding site for oxaloacetate. Leucine 300 provides a ligand contact to CoA. Residue histidine 301 is part of the active site. Residues valine 342, glycine 344, and tyrosine 345 each contribute to the CoA site. Residues histidine 347 and arginine 356 each contribute to the oxaloacetate site. The active site involves histidine 347. 3 residues coordinate CoA: threonine 394, lysine 395, and asparagine 400. Aspartate 402 is an active-site residue. Residues arginine 428 and arginine 448 each contribute to the oxaloacetate site.

It belongs to the citrate synthase family. In terms of assembly, homodimer.

It is found in the mitochondrion matrix. It carries out the reaction propanoyl-CoA + oxaloacetate + H2O = (2S,3S)-2-methylcitrate + CoA + H(+). The catalysed reaction is oxaloacetate + acetyl-CoA + H2O = citrate + CoA + H(+). Its pathway is organic acid metabolism; propanoate degradation. With respect to regulation, activity is inhibited by p-chloromercuribenzoate (pCMB), monoiodoacetamide, H(2)O(2), ATP, ADP, NADH, NADPH, Hg(2+) and Zn(2+). Component of the methylcitrate cycle that catalyzes the synthesis of (2S,3S)-2-methylcitrate from propionyl-CoA and oxaloacetate. Plays an important role in detoxification of propionyl-CoA, an inhibitor of both primary and secondary metabolism. Also has citrate synthase activity using as substrates acetyl-CoA and oxaloacetate. The chain is 2-methylcitrate synthase, mitochondrial from Yarrowia lipolytica (strain CLIB 122 / E 150) (Yeast).